A 272-amino-acid chain; its full sequence is Large ribosomal subunit protein uL2cz/uL2cy (272 aa).

Disordered regions lie at residues 1-33 (MAIHLYKTSTSSTRNGAVQVKSNPRNNLISGQR) and 220-272 (VMNP…RRSK). A2 bears the N-methylalanine mark. Residues 7-30 (KTSTSSTRNGAVQVKSNPRNNLIS) are compositionally biased toward polar residues.

Belongs to the universal ribosomal protein uL2 family. In terms of assembly, component of the chloroplast large ribosomal subunit (LSU). Mature 70S chloroplast ribosomes of higher plants consist of a small (30S) and a large (50S) subunit. The 30S small subunit contains 1 molecule of ribosomal RNA (16S rRNA) and 24 different proteins. The 50S large subunit contains 3 rRNA molecules (23S, 5S and 4.5S rRNA) and 33 different proteins.

The protein localises to the plastid. It localises to the chloroplast. Functionally, component of the chloroplast ribosome (chloro-ribosome), a dedicated translation machinery responsible for the synthesis of chloroplast genome-encoded proteins, including proteins of the transcription and translation machinery and components of the photosynthetic apparatus. The chain is Large ribosomal subunit protein uL2cz/uL2cy (rpl2-A) from Spinacia oleracea (Spinach).